The following is a 152-amino-acid chain: SsrA-binding protein (152 aa).

This sequence belongs to the SmpB family.

The protein resides in the cytoplasm. Its function is as follows. Required for rescue of stalled ribosomes mediated by trans-translation. Binds to transfer-messenger RNA (tmRNA), required for stable association of tmRNA with ribosomes. tmRNA and SmpB together mimic tRNA shape, replacing the anticodon stem-loop with SmpB. tmRNA is encoded by the ssrA gene; the 2 termini fold to resemble tRNA(Ala) and it encodes a 'tag peptide', a short internal open reading frame. During trans-translation Ala-aminoacylated tmRNA acts like a tRNA, entering the A-site of stalled ribosomes, displacing the stalled mRNA. The ribosome then switches to translate the ORF on the tmRNA; the nascent peptide is terminated with the 'tag peptide' encoded by the tmRNA and targeted for degradation. The ribosome is freed to recommence translation, which seems to be the essential function of trans-translation. The polypeptide is SsrA-binding protein (Helicobacter pylori (strain Shi470)).